Here is a 410-residue protein sequence, read N- to C-terminus: Peptidase T (410 aa).

His-79 provides a ligand contact to Zn(2+). The active site involves Asp-81. Asp-142 contacts Zn(2+). Glu-176 serves as the catalytic Proton acceptor. Zn(2+) is bound by residues Glu-177, Asp-199, and His-381.

Belongs to the peptidase M20B family. Zn(2+) serves as cofactor.

The protein localises to the cytoplasm. The catalysed reaction is Release of the N-terminal residue from a tripeptide.. Its function is as follows. Cleaves the N-terminal amino acid of tripeptides. The sequence is that of Peptidase T from Brevibacillus brevis (strain 47 / JCM 6285 / NBRC 100599).